The primary structure comprises 149 residues: Transcriptional repressor NrdR (149 aa).

A zinc finger lies at 3-33 (CPFCSSEDTKVVDSRTTIDGSTKRRRECNNC). Residues 48–138 (IYVVKKDNRR…VYKEFDDIKS (91 aa)) enclose the ATP-cone domain.

This sequence belongs to the NrdR family. Requires Zn(2+) as cofactor.

In terms of biological role, negatively regulates transcription of bacterial ribonucleotide reductase nrd genes and operons by binding to NrdR-boxes. The protein is Transcriptional repressor NrdR of Fusobacterium nucleatum subsp. nucleatum (strain ATCC 25586 / DSM 15643 / BCRC 10681 / CIP 101130 / JCM 8532 / KCTC 2640 / LMG 13131 / VPI 4355).